The sequence spans 149 residues: D-aminoacyl-tRNA deacylase (149 aa).

The Gly-cisPro motif, important for rejection of L-amino acids motif lies at 137 to 138 (GP).

The protein belongs to the DTD family. Homodimer.

Its subcellular location is the cytoplasm. It catalyses the reaction glycyl-tRNA(Ala) + H2O = tRNA(Ala) + glycine + H(+). The enzyme catalyses a D-aminoacyl-tRNA + H2O = a tRNA + a D-alpha-amino acid + H(+). In terms of biological role, an aminoacyl-tRNA editing enzyme that deacylates mischarged D-aminoacyl-tRNAs. Also deacylates mischarged glycyl-tRNA(Ala), protecting cells against glycine mischarging by AlaRS. Acts via tRNA-based rather than protein-based catalysis; rejects L-amino acids rather than detecting D-amino acids in the active site. By recycling D-aminoacyl-tRNA to D-amino acids and free tRNA molecules, this enzyme counteracts the toxicity associated with the formation of D-aminoacyl-tRNA entities in vivo and helps enforce protein L-homochirality. This is D-aminoacyl-tRNA deacylase from Clostridium perfringens (strain ATCC 13124 / DSM 756 / JCM 1290 / NCIMB 6125 / NCTC 8237 / Type A).